Here is a 407-residue protein sequence, read N- to C-terminus: Sensor histidine kinase YdfH (407 aa).

The Cytoplasmic portion of the chain corresponds to 1–25 (MLIRNPFKDKYYSHDRRALNMLALR). 2 helical membrane-spanning segments follow: residues 26-46 (VPGLAFILMIYIASIVLQFVS) and 47-67 (GGWSILLLYAFTILIAIFALL). Residues 68 to 78 (HWHSYRWVKKR) lie on the Cytoplasmic side of the membrane. 2 helical membrane-spanning segments follow: residues 79-99 (VILYFAVQGLITFALANLMTG) and 100-120 (FFILVIIGLYAFLIGQIIGMA). Topologically, residues 121-125 (DRRRT) are cytoplasmic. Residues 126–146 (FLILYLLLLLVINSAYHLHKG) traverse the membrane as a helical segment. Residues 147-150 (EVLH) are Extracellular-facing. A helical membrane pass occupies residues 151–171 (FIVIAAPIMIVIITYAATFFA). The Cytoplasmic segment spans residues 172–407 (QVDEKIKAQL…VPIQGEMQDE (236 aa)). The Histidine kinase domain maps to 201-402 (ERQRMARDLH…QIEITVPIQG (202 aa)). H210 carries the post-translational modification Phosphohistidine; by autocatalysis.

It is found in the cell membrane. The catalysed reaction is ATP + protein L-histidine = ADP + protein N-phospho-L-histidine.. Member of the two-component regulatory system YdfH/YdfI. May activate YdfI by phosphorylation. The chain is Sensor histidine kinase YdfH (ydfH) from Bacillus subtilis (strain 168).